A 158-amino-acid chain; its full sequence is Cystin-1 (158 aa).

The disordered stretch occupies residues 1–146; sequence MGSGSSRSSR…AAISYDHSEE (146 aa). Gly-2 carries the N-myristoyl glycine lipid modification. Composition is skewed to low complexity over residues 19–32 and 39–52; these read ESLP…ALEG and PVAA…AAEE. Residues 29–33 carry the Ciliary targeting motif motif; it reads ALEGG. Basic and acidic residues predominate over residues 65–75; that stretch reads DGRDETLRLLD.

In terms of assembly, interacts (when myristoylated) with UNC119 and UNC119B; interaction is required for localization to cilium. In terms of tissue distribution, expressed at high levels in the kidney and pancreas. Moderate expression seen in the skeletal muscle, liver and heart. A weak expression seen in the brain, lung, uterus, prostate, testis, small intestine and colon.

The protein resides in the cell projection. It is found in the cilium membrane. Its subcellular location is the cytoplasm. The protein localises to the cytoskeleton. It localises to the cilium axoneme. The protein is Cystin-1 (CYS1) of Homo sapiens (Human).